The sequence spans 243 residues: Phomoidride biosynthesis cluster protein B (243 aa).

Belongs to the tstB family.

Functionally, phosphatidylethanolamine-binding protein; part of the gene cluster that mediates the biosynthesis of the antihypercholesterolemic agents phomoidrides which are dimeric anhydrides. Within the pathway, tstB is not essential for dimerization and its function has still to be determined. The pathway begins with the highly reducing polyketide synthase tstA that catalyzes the formation of a C12-fatty acyl-ACP, starting from one acetate and 5 malonate units. The hydrolase tstM is involved in the release of the C12-fatty acyl chain from phiA. The alkylcitrate synthase (ACS) tstJ and the alkylcitrate dehydratase (ACDH) tstI then give rise to decarboxylated monomeric anhydrides by coupling the C12-fatty acyl chain with oxalacetic acid. The cyclase tstC is responsible for the dimerization of the monomeric anhydrides which leads to the production of prephomoidride that contains the characteristic bicyclo[4.3.1]deca-1,6-diene system of phomoidrides. Iterative oxidation catalyzed by the alpha-ketoglutarate-dependent dioxygenase tstK produced then phomoidride A. Finally, the methyltransferase tstE converts phomoidride A to phomoidride B via an acetalization reaction. The phosphatidylethanolamine-binding protein tstB and tstN are not essential for dimerization and their functions have still to be determined. The sequence is that of Phomoidride biosynthesis cluster protein B from Talaromyces stipitatus (strain ATCC 10500 / CBS 375.48 / QM 6759 / NRRL 1006) (Penicillium stipitatum).